The following is a 259-amino-acid chain: MQNLSAKDFYKPCRYNCETKNQMWMSGIADSHDSWCDCDTPFAHLLASIFPPGHTDRTRTIQEILTRDFRKTCLSGGADATNSGMAETIEEKREDFQKEEKEDFTEEQNIEDLLAAVADAEGRYQTNQLKTQETKTNMMCPIQSKKHYKLLTQQKTLLPRCSMTGTTDGVALHQQLLKECNKTSQLIHLSNLIQTQNQHPRKKDYYQSSTTHKRKRKRSTNVSSLSAKKVHARSRKRRKTSSSSSSSSSSSSRNSSTTS.

A coiled-coil region spans residues 82–128 (NSGMAETIEEKREDFQKEEKEDFTEEQNIEDLLAAVADAEGRYQTNQ). The interval 192 to 259 (LIQTQNQHPR…SSSRNSSTTS (68 aa)) is disordered. The span at 228–240 (KKVHARSRKRRKT) shows a compositional bias: basic residues. A compositionally biased stretch (low complexity) spans 241–259 (SSSSSSSSSSSSRNSSTTS).

This is an uncharacterized protein from Homo sapiens (Human).